Here is a 476-residue protein sequence, read N- to C-terminus: Glutathione synthetase (476 aa).

R117 serves as a coordination point for substrate. ATP is bound at residue E137. Positions 137 and 139 each coordinate Mg(2+). Substrate-binding positions include 141–144 (ISSS), 211–213 (ERN), Q217, and 267–270 (RAGY). ATP is bound by residues K308, 367 to 376 (KPQREGGGNN), Y378, 400 to 403 (MDKI), and E426. E371 provides a ligand contact to Mg(2+). R452 lines the substrate pocket. Residues K454 and E460 each contribute to the ATP site. Substrate is bound at residue 463-464 (VA).

The protein belongs to the eukaryotic GSH synthase family. As to quaternary structure, homodimer. Mg(2+) serves as cofactor.

It carries out the reaction gamma-L-glutamyl-L-cysteine + glycine + ATP = glutathione + ADP + phosphate + H(+). The protein operates within sulfur metabolism; glutathione biosynthesis; glutathione from L-cysteine and L-glutamate: step 2/2. The sequence is that of Glutathione synthetase (gshB) from Dictyostelium discoideum (Social amoeba).